The primary structure comprises 497 residues: tRNA-2-methylthio-N(6)-dimethylallyladenosine synthase (497 aa).

A compositionally biased stretch (basic and acidic residues) spans 1–10 (MTLLDSDSRQ). Residues 1 to 26 (MTLLDSDSRQSAEVLPAAGPAPDRPR) form a disordered region. One can recognise an MTTase N-terminal domain in the interval 26 to 142 (RTYQVRTFGC…LPVLLERARI (117 aa)). 6 residues coordinate [4Fe-4S] cluster: C35, C71, C105, C179, C183, and C186. The Radical SAM core domain maps to 165-395 (RESVYAAWVA…VALVEQIALE (231 aa)). A TRAM domain is found at 398–464 (QAQVGRVVEV…PHCLIADQVL (67 aa)).

It belongs to the methylthiotransferase family. MiaB subfamily. In terms of assembly, monomer. The cofactor is [4Fe-4S] cluster.

It is found in the cytoplasm. It carries out the reaction N(6)-dimethylallyladenosine(37) in tRNA + (sulfur carrier)-SH + AH2 + 2 S-adenosyl-L-methionine = 2-methylsulfanyl-N(6)-dimethylallyladenosine(37) in tRNA + (sulfur carrier)-H + 5'-deoxyadenosine + L-methionine + A + S-adenosyl-L-homocysteine + 2 H(+). Its function is as follows. Catalyzes the methylthiolation of N6-(dimethylallyl)adenosine (i(6)A), leading to the formation of 2-methylthio-N6-(dimethylallyl)adenosine (ms(2)i(6)A) at position 37 in tRNAs that read codons beginning with uridine. The chain is tRNA-2-methylthio-N(6)-dimethylallyladenosine synthase from Acidothermus cellulolyticus (strain ATCC 43068 / DSM 8971 / 11B).